A 266-amino-acid chain; its full sequence is MAGNFWQSSHHQQWILDKQDLIRERQHDLKTLSEEEYQKLFMFFANIIQVLGEQLKLRQQVIATATVYFKRFYARNSLKCIDPLLLAPTCILLSSKVEEFGVISNSRLITTCQTVIKNKFSYAYQQEFPYRTNHILECEFYLLENLDCCLIVYQPYRPLLQLMQDIGQEEQLLTLTWRLINDSLRTDVSLLYPPYQIAIGCLQIACVILQKELKSWFAELNVDMDKVQEIARAIVNLFELWKGYDEKKEIQALLEKMPKPKPHPQR.

In terms of domain architecture, Cyclin N-terminal spans 47–151; that stretch reads IIQVLGEQLK…LLENLDCCLI (105 aa).

Belongs to the cyclin family. Cyclin C subfamily. In terms of assembly, component of the Cdk8 module of the Mediator complex.

The protein localises to the nucleus. Functionally, component of the Mediator complex, a coactivator involved in regulated gene transcription of nearly all RNA polymerase II-dependent genes. Mediator functions as a bridge to convey information from gene-specific regulatory proteins to the basal RNA polymerase II transcription machinery. Mediator is recruited to promoters by direct interactions with regulatory proteins and serves as a scaffold for the assembly of a functional preinitiation complex with RNA polymerase II and the general transcription factors. Binds to and activates cyclin-dependent kinase Cdk8 that phosphorylates the CTD (C-terminal domain) of the large subunit of RNA polymerase II (RNAp II), which may inhibit the formation of a transcription initiation complex. The sequence is that of Cyclin-C (CycC) from Anopheles gambiae (African malaria mosquito).